A 103-amino-acid polypeptide reads, in one-letter code: uncharacterized protein (103 aa).

3 consecutive transmembrane segments (helical) span residues 12–34, 49–66, and 79–101; these read GFSWGIALFCLPILLWPLALTIS, TLMSVFLWAYPFGLALIA, and FARGLLGLSAVAFYGMLFYVAGG.

It is found in the cell membrane. This is an uncharacterized protein from Pasteurella multocida (strain Pm70).